Reading from the N-terminus, the 503-residue chain is UPF0522 protein C (503 aa).

The signal sequence occupies residues 1-18 (MKLFILIILSICLALVNS). Residues asparagine 330, asparagine 337, and asparagine 370 are each glycosylated (N-linked (GlcNAc...) asparagine).

This sequence belongs to the UPF0522 family.

It is found in the secreted. This chain is UPF0522 protein C, found in Dictyostelium discoideum (Social amoeba).